We begin with the raw amino-acid sequence, 382 residues long: Mannan endo-1,4-beta-mannosidase (382 aa).

The first 19 residues, 1-19, serve as a signal peptide directing secretion; it reads MVKLFSFLLLVWVASPAFS. Residues Trp-83, Asn-144, 147–151, and Asn-180 contribute to the substrate site; that span reads WDESK. The active-site Proton donor/acceptor is the Glu-181. The substrate site is built by Gln-187, Gln-204, Trp-208, Trp-243, Tyr-282, and His-284. Cys-195 and Cys-262 are disulfide-bonded. The Nucleophile role is filled by Glu-312. A disulfide bridge connects residues Cys-317 and Cys-349. 2 residues coordinate substrate: Trp-341 and Asp-348. The segment at 346–350 is involved in stabilization of the transition state; it reads GGDCS.

It belongs to the glycosyl hydrolase 5 (cellulase A) family. As to quaternary structure, monomer.

The protein resides in the secreted. The enzyme catalyses Random hydrolysis of (1-&gt;4)-beta-D-mannosidic linkages in mannans, galactomannans and glucomannans.. Its activity is regulated as follows. Activated particularly by Ca(2+) and Zn(2+), and to a lesser extent by Na(+), K(+), Mg(2+) and Cu(2+). Activation effect of the divalent metal ions Ca(2+), Zn(2+), Mg(2+) and Cu(2+) is reduced significantly by the addition of EDTA. Strongly inhibited by Mn(2+), Hg(2+) and Ag(+). Its function is as follows. Hydrolyzes 1,4-beta linked polysaccharide backbones of mannans. Has high activity toward locust bean gum. Also active toward konjac and beta-1,4-mannan. Hydrolyzes mannotetraose (M4) and mannopentaose (M5) to mannobiose (M2) and mannotriose (M3) with a little production of mannose (M1). Hydrolyzes beta-1,4-mannan to M2, M3 and M4. Hardly hydrolyzes M2 and M3. Does not hydrolyze p-nitrophenyl-beta-D-mannopyranoside, gua-gum, carboxymethyl cellulose, soluble starch or laminarin. In Cryptopygus antarcticus (Antarctic springtail), this protein is Mannan endo-1,4-beta-mannosidase.